The primary structure comprises 203 residues: Tegument protein UL51 homolog (203 aa).

C4 is lipidated: S-palmitoyl cysteine; by host.

The protein belongs to the herpesviridae UL51 family. Oligomerizes. Interacts with U75; this interaction mediates U75 incorporation to virions. Phosphorylated. Post-translationally, palmitoylation is necessary for Golgi localization.

It is found in the virion tegument. Its subcellular location is the host cytoplasm. It localises to the host Golgi apparatus. Plays several roles during the time course of infection, including egress of virus particles from the perinuclear space and secondary envelopment of cytoplasmic capsids that bud into specific trans-Golgi network (TGN)-derived membranes. In Homo sapiens (Human), this protein is Tegument protein UL51 homolog (U44).